Here is a 1166-residue protein sequence, read N- to C-terminus: Pesticidal crystal protein Cry1Ga (1166 aa).

It belongs to the delta endotoxin family.

In terms of biological role, promotes colloidosmotic lysis by binding to the midgut epithelial cells of insects. The sequence is that of Pesticidal crystal protein Cry1Ga (cry1Ga) from Bacillus thuringiensis.